The following is a 270-amino-acid chain: Tryptophan synthase alpha chain (270 aa).

Catalysis depends on proton acceptor residues Glu-49 and Asp-60.

It belongs to the TrpA family. In terms of assembly, tetramer of two alpha and two beta chains.

The catalysed reaction is (1S,2R)-1-C-(indol-3-yl)glycerol 3-phosphate + L-serine = D-glyceraldehyde 3-phosphate + L-tryptophan + H2O. The protein operates within amino-acid biosynthesis; L-tryptophan biosynthesis; L-tryptophan from chorismate: step 5/5. The alpha subunit is responsible for the aldol cleavage of indoleglycerol phosphate to indole and glyceraldehyde 3-phosphate. In Gluconobacter oxydans (strain 621H) (Gluconobacter suboxydans), this protein is Tryptophan synthase alpha chain.